We begin with the raw amino-acid sequence, 311 residues long: Probable cobalamin biosynthesis protein CobD (311 aa).

4 helical membrane-spanning segments follow: residues 53–73, 76–96, 157–177, and 288–308; these read FIFG…AIYG, ILIN…FLIS, DSII…AFIY, and FSID…YVIF.

It belongs to the CobD/CbiB family.

The protein resides in the cell membrane. It functions in the pathway cofactor biosynthesis; adenosylcobalamin biosynthesis. Converts cobyric acid to cobinamide by the addition of aminopropanol on the F carboxylic group. This chain is Probable cobalamin biosynthesis protein CobD, found in Methanococcus aeolicus (strain ATCC BAA-1280 / DSM 17508 / OCM 812 / Nankai-3).